The sequence spans 374 residues: Queuine tRNA-ribosyltransferase (374 aa).

The active-site Proton acceptor is Asp89. Substrate-binding positions include Asp89–Phe93, Asp143, Gln187, and Gly214. The segment at Gly245–Asp251 is RNA binding. Asp264 serves as the catalytic Nucleophile. The RNA binding; important for wobble base 34 recognition stretch occupies residues Thr269–Arg273. Residues Cys302, Cys304, Cys307, and His333 each contribute to the Zn(2+) site.

Belongs to the queuine tRNA-ribosyltransferase family. In terms of assembly, homodimer. Within each dimer, one monomer is responsible for RNA recognition and catalysis, while the other monomer binds to the replacement base PreQ1. Zn(2+) serves as cofactor.

It catalyses the reaction 7-aminomethyl-7-carbaguanine + guanosine(34) in tRNA = 7-aminomethyl-7-carbaguanosine(34) in tRNA + guanine. The protein operates within tRNA modification; tRNA-queuosine biosynthesis. Functionally, catalyzes the base-exchange of a guanine (G) residue with the queuine precursor 7-aminomethyl-7-deazaguanine (PreQ1) at position 34 (anticodon wobble position) in tRNAs with GU(N) anticodons (tRNA-Asp, -Asn, -His and -Tyr). Catalysis occurs through a double-displacement mechanism. The nucleophile active site attacks the C1' of nucleotide 34 to detach the guanine base from the RNA, forming a covalent enzyme-RNA intermediate. The proton acceptor active site deprotonates the incoming PreQ1, allowing a nucleophilic attack on the C1' of the ribose to form the product. After dissociation, two additional enzymatic reactions on the tRNA convert PreQ1 to queuine (Q), resulting in the hypermodified nucleoside queuosine (7-(((4,5-cis-dihydroxy-2-cyclopenten-1-yl)amino)methyl)-7-deazaguanosine). This chain is Queuine tRNA-ribosyltransferase, found in Shewanella loihica (strain ATCC BAA-1088 / PV-4).